A 432-amino-acid chain; its full sequence is Adenylosuccinate synthetase (432 aa).

Residues 13–19 (GDEGKGK) and 41–43 (GHT) each bind GTP. Asp-14 (proton acceptor) is an active-site residue. Residues Asp-14 and Gly-41 each contribute to the Mg(2+) site. IMP contacts are provided by residues 14-17 (DEGK), 39-42 (NAGH), Thr-130, Arg-144, Gln-225, Thr-240, and Arg-304. Catalysis depends on His-42, which acts as the Proton donor. 300–306 (ATTGRRR) is a substrate binding site. Residues Arg-306, 332–334 (KLD), and 415–417 (STG) contribute to the GTP site.

It belongs to the adenylosuccinate synthetase family. In terms of assembly, homodimer. The cofactor is Mg(2+).

Its subcellular location is the cytoplasm. It carries out the reaction IMP + L-aspartate + GTP = N(6)-(1,2-dicarboxyethyl)-AMP + GDP + phosphate + 2 H(+). It functions in the pathway purine metabolism; AMP biosynthesis via de novo pathway; AMP from IMP: step 1/2. In terms of biological role, plays an important role in the de novo pathway of purine nucleotide biosynthesis. Catalyzes the first committed step in the biosynthesis of AMP from IMP. The polypeptide is Adenylosuccinate synthetase (Klebsiella pneumoniae (strain 342)).